Here is a 193-residue protein sequence, read N- to C-terminus: MARNANITRETKETKIEVFLDIDRKGEIKVSTPVPFFNHMLITLLTYMNSTATVSATDKLPYDDHHIIEDVAITLGLAIKEALGDKRGIKRFSHQIIPMDEALVLVSLDISNRGIAFVNLNLKRSEIGGLATENIPHFFQSFAYNSGVTLHISQLSGYNTHHIIEASFKALGLALYEATRIVDNEIRSTKGVI.

It belongs to the imidazoleglycerol-phosphate dehydratase family.

It is found in the cytoplasm. It carries out the reaction D-erythro-1-(imidazol-4-yl)glycerol 3-phosphate = 3-(imidazol-4-yl)-2-oxopropyl phosphate + H2O. The protein operates within amino-acid biosynthesis; L-histidine biosynthesis; L-histidine from 5-phospho-alpha-D-ribose 1-diphosphate: step 6/9. The polypeptide is Imidazoleglycerol-phosphate dehydratase (Saccharolobus islandicus (strain M.14.25 / Kamchatka #1) (Sulfolobus islandicus)).